The following is a 419-amino-acid chain: Transcription termination factor Rho (419 aa).

In terms of domain architecture, Rho RNA-BD spans 48–123; that stretch reads GFTCSGTLEI…VRLDSINGDH (76 aa). ATP-binding positions include 169–174, 181–186, and arginine 212; these read GKGQRA and KIGKTV.

It belongs to the Rho family. As to quaternary structure, homohexamer. The homohexamer assembles into an open ring structure.

Its function is as follows. Facilitates transcription termination by a mechanism that involves Rho binding to the nascent RNA, activation of Rho's RNA-dependent ATPase activity, and release of the mRNA from the DNA template. This is Transcription termination factor Rho from Neisseria gonorrhoeae.